Consider the following 493-residue polypeptide: Probable malate:quinone oxidoreductase (493 aa).

It belongs to the MQO family. Requires FAD as cofactor.

It catalyses the reaction (S)-malate + a quinone = a quinol + oxaloacetate. It functions in the pathway carbohydrate metabolism; tricarboxylic acid cycle; oxaloacetate from (S)-malate (quinone route): step 1/1. The sequence is that of Probable malate:quinone oxidoreductase from Mycobacterium marinum (strain ATCC BAA-535 / M).